A 151-amino-acid polypeptide reads, in one-letter code: Ocs element-binding factor 1 (151 aa).

The span at 1–17 shows a compositional bias: polar residues; the sequence is MSSSSLSPTAGRTSGSD. The tract at residues 1 to 47 is disordered; it reads MSSSSLSPTAGRTSGSDGDSAADTHRREKRRLSNRESARRSRLRKQQ. The span at 22-39 shows a compositional bias: basic and acidic residues; it reads ADTHRREKRRLSNRESAR. In terms of domain architecture, bZIP spans 24-87; that stretch reads THRREKRRLS…TRVEQENTVL (64 aa). A basic motif region spans residues 26-45; it reads RREKRRLSNRESARRSRLRK. The segment at 52–59 is leucine-zipper; it reads LVQEVARL.

The protein belongs to the bZIP family. In terms of tissue distribution, roots and shoots of young plants, and basal portion of leaves.

The protein resides in the nucleus. Functionally, may contribute to developmentally specific patterns of gene expression. Binds specifically to ocs elements which are transcriptional enhancer found in the promoters of several plant genes. OCSBF-1 is able to bind to a site within each half of the ocs element as well as to animal AP-1 and CREB sites. This chain is Ocs element-binding factor 1 (OBF1), found in Zea mays (Maize).